We begin with the raw amino-acid sequence, 397 residues long: Pectate lyase 2 (397 aa).

Positions 1–25 (MGIKQCCYILYFTLALVALLQPVRS) are cleaved as a signal peptide. Asparagine 37 carries N-linked (GlcNAc...) asparagine glycosylation. Cysteine 54 and cysteine 71 form a disulfide bridge. The Ca(2+) site is built by aspartate 194, aspartate 218, and aspartate 222. Arginine 274 is an active-site residue.

It belongs to the polysaccharide lyase 1 family. Amb a subfamily. Monomer. The cofactor is Ca(2+). The N-terminus is blocked. Pollen and flowers.

The catalysed reaction is Eliminative cleavage of (1-&gt;4)-alpha-D-galacturonan to give oligosaccharides with 4-deoxy-alpha-D-galact-4-enuronosyl groups at their non-reducing ends.. It functions in the pathway glycan metabolism; pectin degradation; 2-dehydro-3-deoxy-D-gluconate from pectin: step 2/5. Its function is as follows. Has pectate lyase activity. The sequence is that of Pectate lyase 2 from Ambrosia artemisiifolia (Common ragweed).